A 177-amino-acid polypeptide reads, in one-letter code: Inorganic pyrophosphatase (177 aa).

Lys29, Arg43, and Tyr55 together coordinate substrate. Mg(2+) is bound by residues Asp65, Asp70, and Asp102. Residue Tyr141 participates in substrate binding.

Belongs to the PPase family. Homohexamer. The cofactor is Mg(2+).

The protein resides in the cytoplasm. It carries out the reaction diphosphate + H2O = 2 phosphate + H(+). Functionally, catalyzes the hydrolysis of inorganic pyrophosphate (PPi) forming two phosphate ions. This Aquifex pyrophilus protein is Inorganic pyrophosphatase.